A 96-amino-acid chain; its full sequence is Co-chaperonin GroES (96 aa).

This sequence belongs to the GroES chaperonin family. Heptamer of 7 subunits arranged in a ring. Interacts with the chaperonin GroEL.

It is found in the cytoplasm. Functionally, together with the chaperonin GroEL, plays an essential role in assisting protein folding. The GroEL-GroES system forms a nano-cage that allows encapsulation of the non-native substrate proteins and provides a physical environment optimized to promote and accelerate protein folding. GroES binds to the apical surface of the GroEL ring, thereby capping the opening of the GroEL channel. This is Co-chaperonin GroES from Wolbachia sp. subsp. Drosophila simulans (strain wRi).